The sequence spans 361 residues: Septin-2 (361 aa).

Position 17 is a phosphotyrosine (Tyr-17). Residues 34 to 306 form the Septin-type G domain; that stretch reads KGFEFTLMVV…ENFRSERLKR (273 aa). The interval 44–51 is G1 motif; sequence GESGLGKS. Residues 44–51, Thr-78, Gly-104, and 183–191 each bind GTP; these read GESGLGKS and KADTLTLKE. Positions 101–104 are G3 motif; it reads DTPG. The G4 motif stretch occupies residues 182-185; sequence AKAD. Lys-190 is subject to N6-acetyllysine. Tyr-211 is modified (phosphotyrosine). Phosphoserine is present on Ser-218. Gly-241 and Arg-256 together coordinate GTP. The tract at residues 260 to 270 is important for dimerization; sequence WGVVEVENPEH.

The protein belongs to the TRAFAC class TrmE-Era-EngA-EngB-Septin-like GTPase superfamily. Septin GTPase family. In terms of assembly, septins polymerize into heterooligomeric protein complexes that form filaments, and associate with cellular membranes, actin filaments and microtubules. GTPase activity is required for filament formation. Septin filaments are assembled from asymmetrical heterotrimers, composed of SEPTIN2, SEPTIN6 and SEPTIN7 that associate head-to-head to form a hexameric unit. Interaction between SEPTIN2 and SEPTIN7 seems indirect. Also interacts with SEPTIN9 and SEPTIN5. Interaction with SEPTIN4 not detected. Component of a septin core octameric complex consisting of SEPTIN12, SEPTIN7, SEPTIN6 and SEPTIN2 or SEPTIN4 in the order 12-7-6-2-2-6-7-12 or 12-7-6-4-4-6-7-12 and located in the sperm annulus. Interacts with MAP4. Interacts with DZIP1L.

It is found in the cytoplasm. It localises to the cytoskeleton. Its subcellular location is the spindle. The protein localises to the cleavage furrow. The protein resides in the midbody. It is found in the cell cortex. It localises to the cell projection. Its subcellular location is the cilium membrane. The protein localises to the cilium. The protein resides in the flagellum. Its function is as follows. Filament-forming cytoskeletal GTPase. Forms a filamentous structure with SEPTIN12, SEPTIN6, SEPTIN2 and probably SEPTIN4 at the sperm annulus which is required for the structural integrity and motility of the sperm tail during postmeiotic differentiation. Required for normal organization of the actin cytoskeleton. Plays a role in the biogenesis of polarized columnar-shaped epithelium by maintaining polyglutamylated microtubules, thus facilitating efficient vesicle transport, and by impeding MAP4 binding to tubulin. Required for the progression through mitosis. Forms a scaffold at the midplane of the mitotic splindle required to maintain CENPE localization at kinetochores and consequently chromosome congression. During anaphase, may be required for chromosome segregation and spindle elongation. Plays a role in ciliogenesis and collective cell movements. In cilia, required for the integrity of the diffusion barrier at the base of the primary cilium that prevents diffusion of transmembrane proteins between the cilia and plasma membranes: probably acts by regulating the assembly of the tectonic-like complex (also named B9 complex) by localizing TMEM231 protein. This chain is Septin-2, found in Rattus norvegicus (Rat).